Consider the following 242-residue polypeptide: Large ribosomal subunit protein uL30y (242 aa).

This sequence belongs to the universal ribosomal protein uL30 family.

In Arabidopsis thaliana (Mouse-ear cress), this protein is Large ribosomal subunit protein uL30y (RPL7B).